Consider the following 44-residue polypeptide: Somatoliberin (44 aa).

Leucine amide is present on Leu44.

Belongs to the glucagon family.

It localises to the secreted. Functionally, GRF is released by the hypothalamus and acts on the adenohypophyse to stimulate the secretion of growth hormone. In Capra hircus (Goat), this protein is Somatoliberin (GHRH).